The sequence spans 218 residues: Pyridoxine/pyridoxamine 5'-phosphate oxidase (218 aa).

Substrate-binding positions include 11-14 (RVEY) and lysine 75. FMN-binding positions include 70–75 (RTVLCK), 85–86 (YT), lysine 92, and glutamine 114. Positions 132, 136, and 140 each coordinate substrate. FMN-binding positions include 149–150 (QS) and tryptophan 195. 201–203 (RVH) contributes to the substrate binding site. Residue arginine 205 coordinates FMN.

The protein belongs to the pyridoxamine 5'-phosphate oxidase family. Homodimer. FMN serves as cofactor.

It carries out the reaction pyridoxamine 5'-phosphate + O2 + H2O = pyridoxal 5'-phosphate + H2O2 + NH4(+). It catalyses the reaction pyridoxine 5'-phosphate + O2 = pyridoxal 5'-phosphate + H2O2. It functions in the pathway cofactor metabolism; pyridoxal 5'-phosphate salvage; pyridoxal 5'-phosphate from pyridoxamine 5'-phosphate: step 1/1. Its pathway is cofactor metabolism; pyridoxal 5'-phosphate salvage; pyridoxal 5'-phosphate from pyridoxine 5'-phosphate: step 1/1. Its function is as follows. Catalyzes the oxidation of either pyridoxine 5'-phosphate (PNP) or pyridoxamine 5'-phosphate (PMP) into pyridoxal 5'-phosphate (PLP). The sequence is that of Pyridoxine/pyridoxamine 5'-phosphate oxidase from Mycolicibacterium gilvum (strain PYR-GCK) (Mycobacterium gilvum (strain PYR-GCK)).